The sequence spans 101 residues: UPF0473 protein spr0177 (101 aa).

Belongs to the UPF0473 family.

This Streptococcus pneumoniae (strain ATCC BAA-255 / R6) protein is UPF0473 protein spr0177.